The sequence spans 116 residues: Somatostatin (116 aa).

The signal sequence occupies residues Met-1–Ala-24. A propeptide spanning residues Ala-25 to Arg-88 is cleaved from the precursor. The segment at Pro-60 to Val-82 is disordered. The segment covering Asp-72–Val-82 has biased composition (basic and acidic residues). The cysteines at positions 105 and 116 are disulfide-linked.

It belongs to the somatostatin family.

The protein localises to the secreted. Functionally, somatostatin inhibits the release of somatotropin. The polypeptide is Somatostatin (SST) (Gallus gallus (Chicken)).